Here is a 106-residue protein sequence, read N- to C-terminus: Met repressor (106 aa).

The protein belongs to the MetJ family. As to quaternary structure, homodimer.

It localises to the cytoplasm. This regulatory protein, when combined with SAM (S-adenosylmethionine) represses the expression of the methionine regulon and of enzymes involved in SAM synthesis. The chain is Met repressor from Vibrio atlanticus (strain LGP32) (Vibrio splendidus (strain Mel32)).